Consider the following 126-residue polypeptide: Glycine cleavage system H protein (126 aa).

In terms of domain architecture, Lipoyl-binding spans 22-104 (IAYVGITDYA…YGKGWLIKIK (83 aa)). At Lys-63 the chain carries N6-lipoyllysine.

Belongs to the GcvH family. The glycine cleavage system is composed of four proteins: P, T, L and H. The cofactor is (R)-lipoate.

Functionally, the glycine cleavage system catalyzes the degradation of glycine. The H protein shuttles the methylamine group of glycine from the P protein to the T protein. The sequence is that of Glycine cleavage system H protein from Phocaeicola vulgatus (strain ATCC 8482 / DSM 1447 / JCM 5826 / CCUG 4940 / NBRC 14291 / NCTC 11154) (Bacteroides vulgatus).